The chain runs to 393 residues: Eukaryotic translation initiation factor 5 (393 aa).

28–35 contributes to the GTP binding site; the sequence is GKGNGIKT. Disordered regions lie at residues 144–179 and 217–247; these read KAVS…DEED and EPQS…SISS. The W2 domain occupies 223–385; it reads EEQDEDDEQE…ETAEEEEEDE (163 aa). Over residues 224–233 the composition is skewed to acidic residues; sequence EQDEDDEQEE.

Belongs to the eIF-2-beta/eIF-5 family.

Its function is as follows. Catalyzes the hydrolysis of GTP bound to the 40S ribosomal initiation complex (40S.mRNA.Met-tRNA[F].eIF-2.GTP) with the subsequent joining of a 60S ribosomal subunit resulting in the release of eIF-2 and the guanine nucleotide. The subsequent joining of a 60S ribosomal subunit results in the formation of a functional 80S initiation complex (80S.mRNA.Met-tRNA[F]). This Dictyostelium discoideum (Social amoeba) protein is Eukaryotic translation initiation factor 5 (eif5).